Consider the following 94-residue polypeptide: Large ribosomal subunit protein uL23 (94 aa).

The protein belongs to the universal ribosomal protein uL23 family. Part of the 50S ribosomal subunit. Contacts protein L29, and trigger factor when it is bound to the ribosome.

One of the early assembly proteins it binds 23S rRNA. One of the proteins that surrounds the polypeptide exit tunnel on the outside of the ribosome. Forms the main docking site for trigger factor binding to the ribosome. The sequence is that of Large ribosomal subunit protein uL23 from Roseiflexus sp. (strain RS-1).